The primary structure comprises 139 residues: Large-conductance mechanosensitive channel (139 aa).

Helical transmembrane passes span 19–39 and 81–101; these read VAVI…ADVI and GNFL…FMVV.

Belongs to the MscL family. In terms of assembly, homopentamer.

Its subcellular location is the cell inner membrane. In terms of biological role, channel that opens in response to stretch forces in the membrane lipid bilayer. May participate in the regulation of osmotic pressure changes within the cell. In Nitrobacter hamburgensis (strain DSM 10229 / NCIMB 13809 / X14), this protein is Large-conductance mechanosensitive channel.